The following is a 152-amino-acid chain: MPENLKIEVIPEGTVIDHIPAGKWLKVIEILGLTKPNGGTLLIASNVPSKKLGRKDIVKVEGRYLSEEEVNKIALIAPMATVNIVKDYKIIEKFNVEIPDEITGILKCPNPNCVSNHEYVTPRFHVESREPLKLRCHYCERTINEDEIAQNL.

Zn(2+)-binding residues include cysteine 108, cysteine 113, cysteine 136, and cysteine 139.

The protein belongs to the PyrI family. Contains catalytic and regulatory chains. Zn(2+) is required as a cofactor.

Functionally, involved in allosteric regulation of aspartate carbamoyltransferase. This chain is Aspartate carbamoyltransferase regulatory chain, found in Thermococcus kodakarensis (strain ATCC BAA-918 / JCM 12380 / KOD1) (Pyrococcus kodakaraensis (strain KOD1)).